Here is a 329-residue protein sequence, read N- to C-terminus: Capsular polysaccharide phosphotransferase WcwK (329 aa).

Belongs to the stealth family.

The sequence is that of Capsular polysaccharide phosphotransferase WcwK (wcwK) from Streptococcus pneumoniae.